A 950-amino-acid polypeptide reads, in one-letter code: MSLPSPLLPVAELAMQNAQQSGYLEHWPQALITQFQFISGLSKFVVETVQRDAQLAEGLPEMLAQESRQEAYRTRLAEQLQACHDEVAGHRVLRQFRNREMVYIAWKDFTQAWSLEASLSHLSELAEAMIFETYQWQYQLCCQEWGTPTNAQGEAQPMLIIGMGKLGGGELNFSSDIDLIFTYPENGETQGARRSIANAQFFTRLGQRLIKALDQQTFDGFCYRVDMRLRPFGESGPLVMSYAALEDYYQEQGRDWERYAMIKARVMGREMYPEYQELRQMLRPFVFRRYIDFSAIQSLRRMKSMISSEVRRRGLSNNIKLGAGGIREIEFIAQVFQLIRGGREPALRQRGLLVTLEAIKQLQLLEEAQVCHLVEAYKYLRRLENLLQAMADKQTQTLPDNELEQLALAVAMGYSQWQALQNDVQQHMAKVHAVFVTLIGDEEDEVSPVERHFNELWDMAHNPEVIEQILQNDLACQNAATMSEQIIQFKADLAKKTLGPRGREVLNRLMPKLFSAIFADADAQFGLPRVLHLLHNIATRTTYLELLDEHPAALTQLVRLCTASPMISEQLARYPILLDELIDPQQLYNPIALDAYRTELRDFLARIPEDDVEQQMDALRQFKQICSLRIAAADIAGVLPVMKVSDHLTYLAEAIVEAVVHQAWQQVAEKYGEPTHLKDREGKGFAVVGYGKVGGWELGYNSDLDVVFLHDCPVNVYTDGKKEIDGRQFYLRLAQRIIHIFSTRTASGILYEVDTRLRPSGASGLLVCPVDAFEEYQHNDAWTWEHQALVRARMIYGDEHLASEFHRVRHQVLAKPREQAKLQKEVADMRAKMRDHLGGKKSDRFMLKQDQGGITDIEFLAQYLVLNYSAEKPKLTRWCDNVRIFETLIAQGVMEEAQAMLLTQAYTTMRDEIHRRNLLNLDADVALDKFVALRQGVSKAWQEWLESSTI.

The interval methionine 1–glutamate 443 is adenylyl removase. The segment at glutamate 450–isoleucine 950 is adenylyl transferase.

It belongs to the GlnE family. Mg(2+) serves as cofactor.

The enzyme catalyses [glutamine synthetase]-O(4)-(5'-adenylyl)-L-tyrosine + phosphate = [glutamine synthetase]-L-tyrosine + ADP. It catalyses the reaction [glutamine synthetase]-L-tyrosine + ATP = [glutamine synthetase]-O(4)-(5'-adenylyl)-L-tyrosine + diphosphate. Its function is as follows. Involved in the regulation of glutamine synthetase GlnA, a key enzyme in the process to assimilate ammonia. When cellular nitrogen levels are high, the C-terminal adenylyl transferase (AT) inactivates GlnA by covalent transfer of an adenylyl group from ATP to specific tyrosine residue of GlnA, thus reducing its activity. Conversely, when nitrogen levels are low, the N-terminal adenylyl removase (AR) activates GlnA by removing the adenylyl group by phosphorolysis, increasing its activity. The regulatory region of GlnE binds the signal transduction protein PII (GlnB) which indicates the nitrogen status of the cell. The polypeptide is Bifunctional glutamine synthetase adenylyltransferase/adenylyl-removing enzyme (Vibrio vulnificus (strain YJ016)).